The primary structure comprises 384 residues: MSWQEKINAALDARRAADALRRRYPVAQGAGRWLVADDRQYLNFSSNDYLGLSHHPQIIRAWKQGAEQFGVGSGGSGHVSGYSVAHQALEEELAEWLGYSRALLFISGFAANQAVIAAMMAKEDRIVADRLSHASLLEAASLSPSQLRRFVHNDVTHLARLLASPCPGQQLVVTEGVFSMDGDSAPLAEIQQVTQQHNGWLMVDDAHGTGVIGEQGRGTCWLQKVKPELLVVTFGKGFGVSGAAVLCSSTVADYLLQFARHLIYSTSMPPAQAQALRASLAVIRSDEGDARREKLAALITRFRAGVQDLPFTLADSCSAIQPLIVGDNSRALQLAEKLRQQGCWVTAIRPPTVPSGTARLRLTLTAAHEMQDIDRLLEVLHGNG.

Substrate is bound at residue arginine 21. 108–109 (GF) is a pyridoxal 5'-phosphate binding site. Histidine 133 contributes to the substrate binding site. Residues serine 179, histidine 207, and threonine 233 each coordinate pyridoxal 5'-phosphate. At lysine 236 the chain carries N6-(pyridoxal phosphate)lysine. Threonine 352 is a binding site for substrate.

This sequence belongs to the class-II pyridoxal-phosphate-dependent aminotransferase family. BioF subfamily. In terms of assembly, homodimer. Pyridoxal 5'-phosphate serves as cofactor.

The catalysed reaction is 6-carboxyhexanoyl-[ACP] + L-alanine + H(+) = (8S)-8-amino-7-oxononanoate + holo-[ACP] + CO2. Its pathway is cofactor biosynthesis; biotin biosynthesis. Catalyzes the decarboxylative condensation of pimeloyl-[acyl-carrier protein] and L-alanine to produce 8-amino-7-oxononanoate (AON), [acyl-carrier protein], and carbon dioxide. In Escherichia coli O157:H7, this protein is 8-amino-7-oxononanoate synthase.